A 93-amino-acid polypeptide reads, in one-letter code: Protein S100-A5 (93 aa).

EF-hand domains are found at residues 12–47 (MVTTFHKYSGREGSKLTLSRKELKELIKTELSLAEK) and 48–83 (MKESSIDNLMKSLDKNSDQEIDFKEYSVFLTTLCMA). Residues threonine 28, glutamate 33, aspartate 61, asparagine 63, aspartate 65, glutamate 67, and glutamate 72 each contribute to the Ca(2+) site.

It belongs to the S-100 family. Homodimer.

Functionally, binds calcium, zinc and copper. One subunit can simultaneously bind 2 calcium ions or 2 copper ions plus 1 zinc ion. Calcium and copper ions compete for the same binding sites. This chain is Protein S100-A5 (S100a5), found in Mus musculus (Mouse).